We begin with the raw amino-acid sequence, 342 residues long: Homocysteine S-methyltransferase 4 (342 aa).

The 316-residue stretch at 13–328 (ALRGFVREAG…ATVRAIARAV (316 aa)) folds into the Hcy-binding domain. 3 residues coordinate Zn(2+): Cys245, Cys313, and Cys314.

Monomer. Requires Zn(2+) as cofactor.

It catalyses the reaction S-methyl-L-methionine + L-homocysteine = 2 L-methionine + H(+). Functionally, catalyzes methyl transfer from S-methylmethionine (SMM) to adenosyl-L-homocysteine (AdoMet). SMM degradation (by HMT-1, HMT-2, HMT-3 and HMT-4) and biosynthesis (by MMT1) constitute the SMM cycle in plants, which is probably required to achieve short term control of AdoMet level. The chain is Homocysteine S-methyltransferase 4 (HMT-4) from Zea mays (Maize).